Consider the following 306-residue polypeptide: Aspartate carbamoyltransferase catalytic subunit (306 aa).

The carbamoyl phosphate site is built by R55 and T56. K84 is a binding site for L-aspartate. R105, H133, and Q136 together coordinate carbamoyl phosphate. Residues R166 and R227 each contribute to the L-aspartate site. The carbamoyl phosphate site is built by L265 and P266.

The protein belongs to the aspartate/ornithine carbamoyltransferase superfamily. ATCase family. Heterododecamer (2C3:3R2) of six catalytic PyrB chains organized as two trimers (C3), and six regulatory PyrI chains organized as three dimers (R2).

The catalysed reaction is carbamoyl phosphate + L-aspartate = N-carbamoyl-L-aspartate + phosphate + H(+). The protein operates within pyrimidine metabolism; UMP biosynthesis via de novo pathway; (S)-dihydroorotate from bicarbonate: step 2/3. Its function is as follows. Catalyzes the condensation of carbamoyl phosphate and aspartate to form carbamoyl aspartate and inorganic phosphate, the committed step in the de novo pyrimidine nucleotide biosynthesis pathway. The protein is Aspartate carbamoyltransferase catalytic subunit of Neisseria meningitidis serogroup C / serotype 2a (strain ATCC 700532 / DSM 15464 / FAM18).